A 296-amino-acid polypeptide reads, in one-letter code: Glycine--tRNA ligase alpha subunit (296 aa).

The protein belongs to the class-II aminoacyl-tRNA synthetase family. In terms of assembly, tetramer of two alpha and two beta subunits.

The protein resides in the cytoplasm. It carries out the reaction tRNA(Gly) + glycine + ATP = glycyl-tRNA(Gly) + AMP + diphosphate. In Francisella tularensis subsp. holarctica (strain FTNF002-00 / FTA), this protein is Glycine--tRNA ligase alpha subunit.